Consider the following 387-residue polypeptide: O-phospho-L-seryl-tRNA:Cys-tRNA synthase 2 (387 aa).

Pyridoxal 5'-phosphate is bound by residues 89-90 (AR), Asn-196, and 219-221 (SGH). An N6-(pyridoxal phosphate)lysine modification is found at Lys-222.

The protein belongs to the SepCysS family. As to quaternary structure, homodimer. Interacts with SepRS. Pyridoxal 5'-phosphate serves as cofactor.

The catalysed reaction is O-phospho-L-seryl-tRNA(Cys) + hydrogen sulfide + H(+) = L-cysteinyl-tRNA(Cys) + phosphate. Converts O-phospho-L-seryl-tRNA(Cys) (Sep-tRNA(Cys)) to L-cysteinyl-tRNA(Cys) (Cys-tRNA(Cys)). The sequence is that of O-phospho-L-seryl-tRNA:Cys-tRNA synthase 2 from Methanococcoides burtonii (strain DSM 6242 / NBRC 107633 / OCM 468 / ACE-M).